Here is a 373-residue protein sequence, read N- to C-terminus: 3 beta-hydroxysteroid dehydrogenase/Delta 5--&gt;4-isomerase type 2 (373 aa).

Catalysis depends on Tyr-155, which acts as the Proton acceptor. Residue Lys-159 coordinates NAD(+). Residues 288–308 form a helical membrane-spanning segment; that stretch reads LPLLYWLAFLLETVSFLLRPF.

Belongs to the 3-beta-HSD family. Adrenal glands, testes and ovaries.

The protein localises to the endoplasmic reticulum membrane. Its subcellular location is the mitochondrion membrane. It carries out the reaction a 3beta-hydroxy-Delta(5)-steroid + NAD(+) = a 3-oxo-Delta(5)-steroid + NADH + H(+). It catalyses the reaction a 3-oxo-Delta(5)-steroid = a 3-oxo-Delta(4)-steroid. It participates in lipid metabolism; steroid biosynthesis. In terms of biological role, 3-beta-HSD is a bifunctional enzyme, that catalyzes the oxidative conversion of Delta(5)-ene-3-beta-hydroxy steroid, and the oxidative conversion of ketosteroids. The 3-beta-HSD enzymatic system plays a crucial role in the biosynthesis of all classes of hormonal steroids. The sequence is that of 3 beta-hydroxysteroid dehydrogenase/Delta 5--&gt;4-isomerase type 2 (Hsd3b) from Rattus norvegicus (Rat).